A 223-amino-acid polypeptide reads, in one-letter code: Neurotrophic factor BDNF precursor form (223 aa).

The N-terminal stretch at 1-5 is a signal peptide; it reads SCMKA. The propeptide occupies 6–114; sequence APMKEVSIRG…AANMSMRVRR (109 aa). An N-linked (GlcNAc...) asparagine glycan is attached at Asn107. Disulfide bonds link Cys127/Cys194 and Cys172/Cys223.

Belongs to the NGF-beta family.

Its subcellular location is the secreted. In terms of biological role, promotes the survival of neuronal populations that are all located either in the central nervous system or directly connected to it. This is Neurotrophic factor BDNF precursor form (BDNF) from Lichanura trivirgata (Rosy boa).